A 426-amino-acid polypeptide reads, in one-letter code: MRILIENVSVFQEGDILNNKNILIENDIIKEISEDKNFEKIDYVIEGKNKIALPGLVNTHTHLAMTLFRGFADDLPLKEWLEEKIWPQEAKLTAEDVYWGSLLGICEMIKGGTIAFADMYFFMDEVAKAVSESGVKASLSVGMIGVSGNENEILNRGVNFAQNWHNAENGRIKVMLAPHAPYTCPPSFLEKVINKAVEMNLSIHTHLSETYLEVENIKNIYGLTPVRLMDRIGLFNVPVLAAHCVFVDDEEIEILSEKGVGVAHNPQSNLKLASGVAPVKKMVEKRVKIGLGTDGPASNNNLDLWEEIRLVATLHKGVEKDPVCIPAKEALNMATKNGMEILGFENSGIIKEGYKADLILVNINKPHFYPRHNLISHLVYSALSSDVDTVIVDGKVLMEKRELKILDEEKIMFEAEKRAFDLIKKR.

Residues His60 and His62 each contribute to the Zn(2+) site. Residues Glu89 and His179 each coordinate substrate. His206 lines the Zn(2+) pocket. The substrate site is built by Glu209 and Asp294. Asp294 contacts Zn(2+).

It belongs to the metallo-dependent hydrolases superfamily. MTA/SAH deaminase family. It depends on Zn(2+) as a cofactor.

The enzyme catalyses S-adenosyl-L-homocysteine + H2O + H(+) = S-inosyl-L-homocysteine + NH4(+). The catalysed reaction is S-methyl-5'-thioadenosine + H2O + H(+) = S-methyl-5'-thioinosine + NH4(+). Catalyzes the deamination of 5-methylthioadenosine and S-adenosyl-L-homocysteine into 5-methylthioinosine and S-inosyl-L-homocysteine, respectively. Is also able to deaminate adenosine. In Dictyoglomus turgidum (strain DSM 6724 / Z-1310), this protein is 5-methylthioadenosine/S-adenosylhomocysteine deaminase.